The chain runs to 89 residues: Putative antitoxin VapB42 (89 aa).

Possibly the antitoxin component of a type II toxin-antitoxin (TA) system. Its cognate toxin is VapC42 (Potential). In Mycobacterium tuberculosis (strain CDC 1551 / Oshkosh), this protein is Putative antitoxin VapB42 (vapB42).